The sequence spans 357 residues: 3-isopropylmalate dehydrogenase (357 aa).

Residues Arg-97, Arg-107, Arg-135, and Asp-224 each contribute to the substrate site. Positions 224, 248, and 252 each coordinate Mg(2+). Position 282–294 (Gly-282–Asn-294) interacts with NAD(+).

The protein belongs to the isocitrate and isopropylmalate dehydrogenases family. LeuB type 1 subfamily. As to quaternary structure, homodimer. Mg(2+) serves as cofactor. Mn(2+) is required as a cofactor.

The protein resides in the cytoplasm. The enzyme catalyses (2R,3S)-3-isopropylmalate + NAD(+) = 4-methyl-2-oxopentanoate + CO2 + NADH. It functions in the pathway amino-acid biosynthesis; L-leucine biosynthesis; L-leucine from 3-methyl-2-oxobutanoate: step 3/4. Functionally, catalyzes the oxidation of 3-carboxy-2-hydroxy-4-methylpentanoate (3-isopropylmalate) to 3-carboxy-4-methyl-2-oxopentanoate. The product decarboxylates to 4-methyl-2 oxopentanoate. This Prochlorococcus marinus subsp. pastoris (strain CCMP1986 / NIES-2087 / MED4) protein is 3-isopropylmalate dehydrogenase.